The chain runs to 297 residues: CASP-like protein 2U8 (297 aa).

Residues 1 to 10 are Cytoplasmic-facing; it reads MLELYEKRRA. Residues 11-31 traverse the membrane as a helical segment; the sequence is LLLLRLAAMFLSLAALLITVL. Topologically, residues 32-64 are extracellular; sequence NREDGFFSINVFGSPQPILAKATADFTLVKGLK. A helical membrane pass occupies residues 65-85; that stretch reads FFAGAMGIVAGYSFLQLAIAM. Over 86–101 the chain is Cytoplasmic; the sequence is ASIFSGAPSILGGKRM. A helical transmembrane segment spans residues 102–122; it reads AWLCFVGDMTASHLCAAAAAV. The Extracellular segment spans residues 123–148; the sequence is SAQLAYLGKRGAPMWSAVCTYFSHYC. A helical transmembrane segment spans residues 149-169; the sequence is LVFGLAVILAFLATLAALLVA. The Cytoplasmic portion of the chain corresponds to 170–297; that stretch reads SISSYHLAYD…RVLEMETPCK (128 aa).

The protein belongs to the Casparian strip membrane proteins (CASP) family. As to quaternary structure, homodimer and heterodimers.

It localises to the cell membrane. The polypeptide is CASP-like protein 2U8 (Selaginella moellendorffii (Spikemoss)).